Here is a 1141-residue protein sequence, read N- to C-terminus: Serine-aspartate repeat-containing protein E (1141 aa).

Residues 1-52 (MINRDNKKAITKKGMISNRLNKFSIRKYTVGTASILVGTTLIFGLGNQEAKA) form the signal peptide. The YSIRK-G/S signaling motif motif lies at 23–34 (FSIRKYTVGTAS). Residues 53-601 (AENTSTENAK…GDGTVKPEEK (549 aa)) are ligand binding A region. The tract at residues 54 to 225 (ENTSTENAKQ…SKEELKNNPE (172 aa)) is disordered. Basic and acidic residues predominate over residues 61-75 (AKQDDATTSDNKEVV). Low complexity predominate over residues 77 to 90 (EAENNSTTENDSTN). Positions 92-109 (IKKETNTDSQPEAKEEST) are enriched in basic and acidic residues. The segment covering 110–126 (KSSTQQQQNNVTATTET) has biased composition (low complexity). Over residues 130–145 (NIEKENVKPSTDKTAT) the composition is skewed to basic and acidic residues. A compositionally biased stretch (polar residues) spans 158–207 (PNNTNNDVTTKPSTSEIQTKPTTPQESTNIENSQPQPTPSKVDNQVTDAT). Over residues 216-225 (SKEELKNNPE) the composition is skewed to basic and acidic residues. 3 consecutive CNA-B domains span residues 602–714 (LYKI…YKEP), 715–824 (KYNL…YKTP), and 825–935 (KYSL…EEDT). Residues 899–1117 (VTNTTEDDKD…GSENNGSNNA (219 aa)) are disordered. 2 stretches are compositionally biased toward acidic residues: residues 903–913 (TEDDKDADGGE) and 930–1080 (YFEE…DSDS). The LPXTG sorting signal signature appears at 1104 to 1108 (LPETG). T1107 carries the pentaglycyl murein peptidoglycan amidated threonine modification. Positions 1108–1141 (GSENNGSNNATLFGGLFAALGSLLLFGRRKKQNK) are cleaved as a propeptide — removed by sortase.

This sequence belongs to the serine-aspartate repeat-containing protein (SDr) family. As to quaternary structure, interacts with host complement factor H/CFAH (via C-terminus). Interacts with host complement regulator C4BPA.

The protein localises to the secreted. It localises to the cell wall. Its function is as follows. Cell surface-associated calcium-binding protein which plays an important role in adhesion and pathogenesis. Contributes to the resistance to killing by innate immune components in blood and thus attenuates bacterial clearance by interacting with host complement factor H/CFAH and modulating its activity. Also inhibits bacterial opsonization and killing by interacting with host complement regulator C4BPA and thus inhibiting classical complement pathway activation. The chain is Serine-aspartate repeat-containing protein E (sdrE) from Staphylococcus aureus (strain MSSA476).